The sequence spans 94 residues: MNHCLHSNTLAKIVCTVTLITLYFYFFSTRFNELIELAVQMFFALIGLFWVFIVSPFSRKVQISERFKQKSENARIVGMIDFVLEQKYKKSISE.

The next 2 membrane-spanning stretches (helical) occupy residues 9 to 29 (TLAK…FFST) and 34 to 54 (LIEL…VFIV).

It localises to the cell membrane. This is an uncharacterized protein from Bacillus subtilis (strain 168).